The following is a 364-amino-acid chain: mRNA decay activator protein ZFP36L2-B (364 aa).

Positions 102–111 are enriched in basic and acidic residues; the sequence is SFSENGERSQ. The disordered stretch occupies residues 102–129; that stretch reads SFSENGERSQHLLHLQQQQQQQKAGAQV. The segment covering 113-123 has biased composition (low complexity); the sequence is LLHLQQQQQQQ. The RNA-binding motif lies at 133–138; that stretch reads RYKTEL. C3H1-type zinc fingers lie at residues 133 to 161 and 171 to 199; these read RYKTELCRPFEENGACKYGEKCQFAHGFH and KYKTELCRTFHTIGFCPYGPRCHFIHNAE. Residues 150-191 are RNA-binding; it reads YGEKCQFAHGFHELRSLTRHPKYKTELCRTFHTIGFCPYGPR. The tract at residues 308–350 is disordered; sequence SESPVFDAPPSPPDSLSDRDSYLSGSLSSGSLSGSDSPTLDSN. Over residues 329 to 348 the composition is skewed to low complexity; sequence YLSGSLSSGSLSGSDSPTLD.

Post-translationally, phosphorylated. As to expression, remains unlocalized in the egg and early embryo. From stage 21 (late neurula), expressed around the pronephros in the anterior crests, pharyngeal arch, hindbrain, mesodermal tissues around the pronephros and tail-bud. This expression pattern is maintained up to the tadpole stage.

It localises to the nucleus. The protein resides in the cytoplasm. Its function is as follows. Zinc-finger RNA-binding protein that destabilizes several cytoplasmic AU-rich element (ARE)-containing mRNA transcripts by promoting their poly(A) tail removal or deadenylation, and hence provide a mechanism for attenuating protein synthesis. Acts as a 3'-untranslated region (UTR) ARE mRNA-binding adapter protein to communicate signaling events to the mRNA decay machinery. Functions by recruiting the CCR4-NOT deadenylase complex and probably other components of the cytoplasmic RNA decay machinery to the bound ARE-containing mRNAs, and hence promotes ARE-mediated mRNA deadenylation and decay processes. Binds to 3'-UTR ARE of numerous mRNAs. Also induces the degradation of ARE-containing mRNAs even in absence of poly(A) tail. Required for tubulogenesis during pronephros development. This Xenopus laevis (African clawed frog) protein is mRNA decay activator protein ZFP36L2-B (zfp36l2-B).